Reading from the N-terminus, the 555-residue chain is Formate--tetrahydrofolate ligase (555 aa).

An ATP-binding site is contributed by 64 to 71; it reads TKAGIGKT.

The protein belongs to the formate--tetrahydrofolate ligase family.

The enzyme catalyses (6S)-5,6,7,8-tetrahydrofolate + formate + ATP = (6R)-10-formyltetrahydrofolate + ADP + phosphate. It functions in the pathway one-carbon metabolism; tetrahydrofolate interconversion. This chain is Formate--tetrahydrofolate ligase, found in Parabacteroides distasonis (strain ATCC 8503 / DSM 20701 / CIP 104284 / JCM 5825 / NCTC 11152).